Here is a 521-residue protein sequence, read N- to C-terminus: GMP synthase [glutamine-hydrolyzing] (521 aa).

One can recognise a Glutamine amidotransferase type-1 domain in the interval 5–197 (KILILDFGSQ…VLDICGAQPS (193 aa)). Cys81 acts as the Nucleophile in catalysis. Catalysis depends on residues His171 and Glu173. In terms of domain architecture, GMPS ATP-PPase spans 198 to 390 (WTMPNYIEEA…LGLPREMVYR (193 aa)). 225 to 231 (SGGVDSS) contributes to the ATP binding site.

As to quaternary structure, homodimer.

It carries out the reaction XMP + L-glutamine + ATP + H2O = GMP + L-glutamate + AMP + diphosphate + 2 H(+). The protein operates within purine metabolism; GMP biosynthesis; GMP from XMP (L-Gln route): step 1/1. Its function is as follows. Catalyzes the synthesis of GMP from XMP. The sequence is that of GMP synthase [glutamine-hydrolyzing] from Neisseria meningitidis serogroup C / serotype 2a (strain ATCC 700532 / DSM 15464 / FAM18).